A 198-amino-acid polypeptide reads, in one-letter code: Penicillin-binding protein activator LpoB (198 aa).

The first 20 residues, 1-20 (MSWIRIRRSGVLLLALVLSG), serve as a signal peptide directing secretion. A lipid anchor (N-palmitoyl cysteine) is attached at Cys21. A lipid anchor (S-diacylglycerol cysteine) is attached at Cys21. A disordered region spans residues 28–62 (PQPAAPVEPVTPPVNVPQPPKAEPGQNVPPPPKMQ). Residues 30-61 (PAAPVEPVTPPVNVPQPPKAEPGQNVPPPPKM) are compositionally biased toward pro residues.

This sequence belongs to the LpoB family. Interacts with PBP1b.

Its subcellular location is the cell outer membrane. Regulator of peptidoglycan synthesis that is essential for the function of penicillin-binding protein 1B (PBP1b). The polypeptide is Penicillin-binding protein activator LpoB (Erwinia amylovora (strain CFBP1430)).